Reading from the N-terminus, the 71-residue chain is UPF0346 protein MGAS2096_Spy0401 (71 aa).

It belongs to the UPF0346 family.

The polypeptide is UPF0346 protein MGAS2096_Spy0401 (Streptococcus pyogenes serotype M12 (strain MGAS2096)).